The sequence spans 311 residues: Olfactory receptor 52J3 (311 aa).

At 1–27 (MFYHNKSIFHPVTFFLIGIPGLEDFHM) the chain is on the extracellular side. Asn5 carries an N-linked (GlcNAc...) asparagine glycan. The chain crosses the membrane as a helical span at residues 28 to 48 (WISGPFCSVYLVALLGNATIL). At 49–56 (LVIKVEQT) the chain is on the cytoplasmic side. Residues 57 to 77 (LREPMFYFLAILSTIDLALST) form a helical membrane-spanning segment. Over 78–101 (TSVPRMLGIFWFDAHEINYGACVA) the chain is Extracellular. Cys99 and Cys191 are joined by a disulfide. Residues 102-122 (QMFLIHAFTGMEAEVLLAMAF) form a helical membrane-spanning segment. Over 123 to 141 (DRYVAVCAPLHYATILTSQ) the chain is Cytoplasmic. Residues 142-162 (VLVGISMCIVIRPVLLTLPMV) traverse the membrane as a helical segment. The Extracellular segment spans residues 163 to 198 (YLIYRLPFCQAHIIAHSYCEHMGIAKLSCGNIRING). A helical membrane pass occupies residues 199-218 (IYGLFVVSFFVLNLVLIGIS). Residues 219 to 238 (YVYILRAVFRLPSHDAQLKA) lie on the Cytoplasmic side of the membrane. The helical transmembrane segment at 239 to 259 (LSTCGAHVGVICVFYIPSVFS) threads the bilayer. Over 260-274 (FLTHRFGHQIPGYIH) the chain is Extracellular. A helical membrane pass occupies residues 275–295 (ILVANLYLIIPPSLNPIIYGV). Residues 296–311 (RTKQIRERVLYVFTKK) are Cytoplasmic-facing.

This sequence belongs to the G-protein coupled receptor 1 family.

It localises to the cell membrane. Its function is as follows. Odorant receptor. The protein is Olfactory receptor 52J3 (OR52J3) of Homo sapiens (Human).